The chain runs to 123 residues: Small ribosomal subunit protein uS12 (123 aa).

3-methylthioaspartic acid is present on aspartate 89. Residues 104–123 (SVGVKDRKKSRSKYGAKRPK) are disordered. Residues 109–123 (DRKKSRSKYGAKRPK) are compositionally biased toward basic residues.

Belongs to the universal ribosomal protein uS12 family. In terms of assembly, part of the 30S ribosomal subunit. Contacts proteins S8 and S17. May interact with IF1 in the 30S initiation complex.

Its function is as follows. With S4 and S5 plays an important role in translational accuracy. In terms of biological role, interacts with and stabilizes bases of the 16S rRNA that are involved in tRNA selection in the A site and with the mRNA backbone. Located at the interface of the 30S and 50S subunits, it traverses the body of the 30S subunit contacting proteins on the other side and probably holding the rRNA structure together. The combined cluster of proteins S8, S12 and S17 appears to hold together the shoulder and platform of the 30S subunit. The polypeptide is Small ribosomal subunit protein uS12 (Geotalea daltonii (strain DSM 22248 / JCM 15807 / FRC-32) (Geobacter daltonii)).